The sequence spans 255 residues: Geranylgeranylglyceryl phosphate synthase (255 aa).

Positions 34 and 64 each coordinate Mg(2+). Sn-glycerol 1-phosphate is bound by residues 182 to 188 (YLEAGSG), 213 to 214 (GG), and 235 to 236 (GN).

Belongs to the GGGP/HepGP synthase family. Group II subfamily. Mg(2+) serves as cofactor.

It is found in the cytoplasm. The enzyme catalyses sn-glycerol 1-phosphate + (2E,6E,10E)-geranylgeranyl diphosphate = sn-3-O-(geranylgeranyl)glycerol 1-phosphate + diphosphate. It functions in the pathway membrane lipid metabolism; glycerophospholipid metabolism. In terms of biological role, prenyltransferase that catalyzes the transfer of the geranylgeranyl moiety of geranylgeranyl diphosphate (GGPP) to the C3 hydroxyl of sn-glycerol-1-phosphate (G1P). This reaction is the first ether-bond-formation step in the biosynthesis of archaeal membrane lipids. This is Geranylgeranylglyceryl phosphate synthase from Saccharolobus solfataricus (strain ATCC 35092 / DSM 1617 / JCM 11322 / P2) (Sulfolobus solfataricus).